A 102-amino-acid chain; its full sequence is uncharacterized protein (102 aa).

Helical transmembrane passes span 14–34 (IKNW…VISA), 35–55 (VAFT…LILI), and 76–96 (ILSI…HCYI).

It is found in the cell membrane. This is an uncharacterized protein from Methanocaldococcus jannaschii (strain ATCC 43067 / DSM 2661 / JAL-1 / JCM 10045 / NBRC 100440) (Methanococcus jannaschii).